The sequence spans 1193 residues: MNLTKLMKVIGYINIITNCVQSFTNRADKKRYNVFAKSFINTINTNLYTFKAVMSKTPEWIHEKSPKHNSYDIIEKRYNEEFKMTYTVYQHKKAKTQVISLGTNDPLDVEQAFAFYVKTLTHSGKGIPHILEHSVLSGSKNYNYKNSIGLLEKGTLHTHLNAYTFNDRTVYMAGSMNNKDFFNIMGVYMDSVFQPNVLENKYIFETEGWTYEVEKLKEDEKGKAEIPQMKDYKVSFNGIVYNEMKGALSSPLEDLYHEEMKYMFPDNVHSNNSGGDPKEITNLTYEEFKEFYYKNYNPKKVKVFFFSKNNPTELLNFVDQYLGQLDYSKYRDDAVESVEYQTYKKGPFYIKKKYGDHSEEKENLVSVAWLLNPKVDKTNNHNNNHSNNQSSENNGYSNGSHSSDLSLENPTDYFVLLIINNLLIHTPESVLYKALTDCGLGNNVIDRGLNDSLVQYIFSIGLKGIKRNNEKIKNFDKVHYEVEDVIMNALKKVVKEGFNKSAVEASINNIEFILKEANLKTSKSIDFVFEMTSKLNYNRDPLLIFEFEKYLNIVKNKIKNEPMYLEKFVEKHFINNAHRSVILLEGDENYAQEQENLEKQELKKRIENFNEQEKEQVIKNFEELSKYKNAEESPEHLNKFPIISISDLNKKTLEVPVNVYFTNINENNNIMETYNKLKTNEHMLKDNMDVFLKKYVLKNDKHNTNNNNNNNNNMDYSFTETKYEGNVPILVYEMPTTGIVYLQFVFSLDHLTVDELAYLNLFKTLILENKTNKRSSEDFVILREKNIGSMSANVALYSKDDHLNVTDKYNAQALFNLEMHVLSHKCNDALNIALEAVKESDFSNKKKVIDILKRKINGMKTTFSEKGYAILMKYVKAHLNSKHYAHNIIYGYENYLKLQEQLELAENDFKTLENILVRIRNKIFNKKNLMVSVTSDYGALKHLFVNSNESLKNLVSYFEENDKYINDMQNKVNDPTVMGWNEEIKSKKLFDEEKVKKEFFVLPTFVNSVSMSGILFKPGEYLDPSFTVIVAALKNSYLWDTVRGLNGAYGVFADIEYDGSVVFLSARDPNLEKTLATFRESAKGLRKMADTMTENDLLRYIINTIGTIDKPRRGIELSKLSFLRLISNESEQDRVEFRKRIMNTKKEDFYKFADLLESKVNEFEKNIVIITTKEKANEYIANVDGEFKKVLIE.

His129 contributes to the Zn(2+) binding site. Glu132 acts as the Proton acceptor in catalysis. Positions 133 and 243 each coordinate Zn(2+). Positions 376-404 are disordered; it reads DKTNNHNNNHSNNQSSENNGYSNGSHSSD. Residues 380 to 394 show a composition bias toward low complexity; sequence NHNNNHSNNQSSENN. The span at 395 to 404 shows a compositional bias: polar residues; sequence GYSNGSHSSD. The stretch at 583-619 forms a coiled coil; sequence LLEGDENYAQEQENLEKQELKKRIENFNEQEKEQVIK.

The protein belongs to the peptidase M16 family. In terms of assembly, monomer. Component of the hemozoin formation complex (HFC) composed of falcipains FP2A and/or FP2B, plasmepsins PMII, PMIII/HAP and PMIV, heme detoxifying protein HDP and falcilysin FLN. The HFC complex is involved in hemoglobin degradation and detoxification of heme in the food vacuole during the asexual blood stage. The cofactor is Zn(2+). Post-translationally, does not require processing for targeting to the food vacuole or maturation.

The protein localises to the vacuole membrane. It localises to the plastid. The protein resides in the apicoplast. It is found in the vesicle. Functionally, in the food vacuole, acts downstream of proteases plasmepsins PMI and PMII and falcipains during the catabolism of host hemoglobin by cleaving peptide fragments of alpha and beta hemoglobin subunits generated by PMI and PMII and falcipains. In the apicoplast, degrades apicoplast transit peptides after their cleavage. Prefers bulky hydrophobic amino acids in the P1' position at both acidic and neutral pH. At P2', prefers hydrophobic residues at acidic pH; at neutral pH, these same residues are abundant but prefers Arg. At P3', prefers hydrophobic residues, especially Met, at both pH conditions. At P4' and P5', prefers acidic residues at acidic pH, however, at neutral pH, the enzyme is less selective at these positions. The optimal site cleavage at acidic pH is YNEHS-|-FFMEE and, at neutral pH, MKRHS-|-FRMRG. The protein is Falcilysin of Plasmodium falciparum (isolate 3D7).